The primary structure comprises 118 residues: Large ribosomal subunit protein bL17 (118 aa).

It belongs to the bacterial ribosomal protein bL17 family. As to quaternary structure, part of the 50S ribosomal subunit. Contacts protein L32.

The sequence is that of Large ribosomal subunit protein bL17 from Phytoplasma mali (strain AT).